The following is a 186-amino-acid chain: Small ribosomal subunit protein uS5 (186 aa).

Positions 20 to 83 (FVDKLVHINR…EAAKRDMIFV (64 aa)) constitute an S5 DRBM domain.

It belongs to the universal ribosomal protein uS5 family. As to quaternary structure, part of the 30S ribosomal subunit. Contacts proteins S4 and S8.

Its function is as follows. With S4 and S12 plays an important role in translational accuracy. Located at the back of the 30S subunit body where it stabilizes the conformation of the head with respect to the body. In Brucella abortus (strain S19), this protein is Small ribosomal subunit protein uS5.